A 623-amino-acid polypeptide reads, in one-letter code: MVSKQQTMGFQTEVKQMLHLVVHSLYSNKEIFLRELISNASDALDKLRFLALSNGSLFENDSDLKISIQINEKLQTITISDNGIGLSWEEAVENLGTIAKSGTKEFISQLTGEQAKDSQLIGQFGVGFYSAFIVADKVTVKSRRAGLQPEDGIVWESKGDGEFTIGYEKKSTRGTEITLHLKPENDEFLSDWRIRGIISKYSDHICWPIVMKKLSEEGKESKEFETVNKATALWTLQKSEIGEEDYKQLYKHISHDYMDPLTWSHNHVEGKHEYITLLYIPAHAPFDLWQHEAKHGLKLYVKRVFIMDEATQFLPRYLRFIKGIVDASDLPLNISREILQDNKQVESIRAACTKRVLSMLEKMATNDKETYQKFWNEFGLVLKEGPIEDFANKEAIAKLLRFSTTASGSEKQEVSLEEYVSRMKEGQDKIYYITASSYNAAKNSPHLEIFRKKGIEVLLLSDKVDEWLVGYMNEFTGKKLQSISKGKVELGDDETSEQIKEQEKTLEPLIKHIKSVLNERVKDVLLTNRLTDSPACVVADEQDMGLEMQRILQAAGQQIPVSKPIFEINPEHALIKRLHDIQDDNQFELWVTMLFEQAVLAEGGQLDNPADFVNRVNRLLVSS.

Residues methionine 1–arginine 336 are a; substrate-binding. Residues glutamate 337–arginine 550 are b. The interval isoleucine 551–serine 623 is c.

The protein belongs to the heat shock protein 90 family. In terms of assembly, homodimer.

Its subcellular location is the cytoplasm. Its function is as follows. Molecular chaperone. Has ATPase activity. The sequence is that of Chaperone protein HtpG from Legionella pneumophila (strain Lens).